We begin with the raw amino-acid sequence, 427 residues long: tRNA(Ile)-lysidine synthase (427 aa).

27–32 (SGGVDS) contacts ATP.

It belongs to the tRNA(Ile)-lysidine synthase family.

It is found in the cytoplasm. It carries out the reaction cytidine(34) in tRNA(Ile2) + L-lysine + ATP = lysidine(34) in tRNA(Ile2) + AMP + diphosphate + H(+). Its function is as follows. Ligates lysine onto the cytidine present at position 34 of the AUA codon-specific tRNA(Ile) that contains the anticodon CAU, in an ATP-dependent manner. Cytidine is converted to lysidine, thus changing the amino acid specificity of the tRNA from methionine to isoleucine. The chain is tRNA(Ile)-lysidine synthase from Streptococcus equi subsp. zooepidemicus (strain H70).